Consider the following 104-residue polypeptide: uncharacterized protein (104 aa).

This is an uncharacterized protein from Mycobacterium tuberculosis (strain CDC 1551 / Oshkosh).